A 475-amino-acid polypeptide reads, in one-letter code: MSPQTETKAGVGFKAGVKDYRLTYYTPDYETKETDILAAFRMTPQAGVPPEEAGAAVAAESSTGTWTTVWTDGLTSLDRYKGRCYDIEPVPGEENQYIVYVAYPLDLFEEGSVTNLFTSIVGNVFGFKALRALRLEDLRIPPAYSKTFQGPPHGIQVERDKINKYGRPLLGCTIKPKLGLSAKNYGRAVYEVLRGGLDFTKDDENVTSQPFMRWRDRFLFCAEAIYKAQAETGEIKGHYLNATAGTCEEMLKRAEYAKELGVPIVMHDYLTGGFTANTSLAHYCRDNGLLLHIHRAMHAVIDRQKNHGIHFRVLAKALRMSGGDHIHSGTVVGKLEGEREVTLGFVDLLRDDYIEKDRSRGIYFTQDWVSMPGVLPVASGGIHVWHMPALTEIFGDDSVLQFGGGTLGHPWGNAPGAVANRVALEACVQARNEGRDLAREGNDVIREATKWSPELAAACEVWKEIKFEFDTIDTL.

Residues 1–2 (MS) constitute a propeptide that is removed on maturation. Proline 3 carries the N-acetylproline modification. Lysine 14 bears the N6,N6,N6-trimethyllysine mark. Asparagine 123 and threonine 173 together coordinate substrate. Lysine 175 functions as the Proton acceptor in the catalytic mechanism. Lysine 177 lines the substrate pocket. Residues lysine 201, aspartate 203, and glutamate 204 each coordinate Mg(2+). Lysine 201 carries the N6-carboxylysine modification. The Proton acceptor role is filled by histidine 294. Arginine 295, histidine 327, and serine 379 together coordinate substrate.

The protein belongs to the RuBisCO large chain family. Type I subfamily. As to quaternary structure, heterohexadecamer of 8 large chains and 8 small chains; disulfide-linked. The disulfide link is formed within the large subunit homodimers. Mg(2+) is required as a cofactor. The disulfide bond which can form in the large chain dimeric partners within the hexadecamer appears to be associated with oxidative stress and protein turnover.

It is found in the plastid. Its subcellular location is the chloroplast. The enzyme catalyses 2 (2R)-3-phosphoglycerate + 2 H(+) = D-ribulose 1,5-bisphosphate + CO2 + H2O. The catalysed reaction is D-ribulose 1,5-bisphosphate + O2 = 2-phosphoglycolate + (2R)-3-phosphoglycerate + 2 H(+). RuBisCO catalyzes two reactions: the carboxylation of D-ribulose 1,5-bisphosphate, the primary event in carbon dioxide fixation, as well as the oxidative fragmentation of the pentose substrate in the photorespiration process. Both reactions occur simultaneously and in competition at the same active site. This chain is Ribulose bisphosphate carboxylase large chain, found in Zygnema circumcarinatum (Green alga).